We begin with the raw amino-acid sequence, 154 residues long: Major allergen Api g 1, isoallergen 1 (154 aa).

This sequence belongs to the BetVI family.

This Apium graveolens (Celery) protein is Major allergen Api g 1, isoallergen 1.